We begin with the raw amino-acid sequence, 102 residues long: Inner membrane protein YaiY (102 aa).

Topologically, residues 1–24 (MADFTLSKSLFSGKYRNASSTPGN) are cytoplasmic. Residues 25-45 (IAYALFVLFCFWAGAQLLNLL) form a helical membrane-spanning segment. The Periplasmic segment spans residues 46-74 (VHAPGVYERLMQVQETGRPRVEIGLGVGT). The chain crosses the membrane as a helical span at residues 75–95 (IFGLIPFLVGCLIFAVVALWL). Over 96-102 (HWRHRRQ) the chain is Cytoplasmic.

It is found in the cell inner membrane. This Escherichia coli O157:H7 protein is Inner membrane protein YaiY (yaiY).